The sequence spans 477 residues: P3 protein (477 aa).

Residues Met-1–Gly-21 form a disordered region. 8 helical membrane-spanning segments follow: residues Pro-225–Ala-245, Ala-253–Phe-273, Val-281–Leu-301, Val-320–Ile-340, Val-361–Val-381, Leu-383–Leu-403, Val-417–Leu-437, and Phe-450–Tyr-470.

This sequence belongs to the bile acid:sodium symporter (BASS) (TC 2.A.28) family.

It is found in the membrane. In terms of biological role, the ubiquitous expression and the conservation of the sequence in distant animal species suggest that the gene codes for a protein with housekeeping functions. The chain is P3 protein (SLC10A3) from Bos taurus (Bovine).